The primary structure comprises 395 residues: Acetate kinase (395 aa).

Asn7 contacts Mg(2+). Lys14 is a binding site for ATP. Residue Arg85 participates in substrate binding. Asp142 serves as the catalytic Proton donor/acceptor. ATP-binding positions include 202–206 (HLGNG), 277–279 (DMR), and 325–329 (GIGEN). Glu378 contributes to the Mg(2+) binding site.

The protein belongs to the acetokinase family. In terms of assembly, homodimer. It depends on Mg(2+) as a cofactor. Mn(2+) serves as cofactor.

It is found in the cytoplasm. It catalyses the reaction acetate + ATP = acetyl phosphate + ADP. Its pathway is metabolic intermediate biosynthesis; acetyl-CoA biosynthesis; acetyl-CoA from acetate: step 1/2. Catalyzes the formation of acetyl phosphate from acetate and ATP. Can also catalyze the reverse reaction. This is Acetate kinase from Deinococcus geothermalis (strain DSM 11300 / CIP 105573 / AG-3a).